The primary structure comprises 308 residues: N-acetylmuramic acid 6-phosphate etherase (308 aa).

Residues 62–225 enclose the SIS domain; it reads TAARLRQGGR…STGVMVQLGK (164 aa). Glutamate 90 functions as the Proton donor in the catalytic mechanism. Residue glutamate 121 is part of the active site.

Belongs to the GCKR-like family. MurNAc-6-P etherase subfamily. Homodimer.

The enzyme catalyses N-acetyl-D-muramate 6-phosphate + H2O = N-acetyl-D-glucosamine 6-phosphate + (R)-lactate. It functions in the pathway amino-sugar metabolism; N-acetylmuramate degradation. In terms of biological role, specifically catalyzes the cleavage of the D-lactyl ether substituent of MurNAc 6-phosphate, producing GlcNAc 6-phosphate and D-lactate. The sequence is that of N-acetylmuramic acid 6-phosphate etherase from Thermosynechococcus vestitus (strain NIES-2133 / IAM M-273 / BP-1).